The sequence spans 655 residues: uncharacterized protein (655 aa).

Residues 5–25 form a helical membrane-spanning segment; that stretch reads IIIIIFIVINFINIIISSITF. 2 disordered regions span residues 337-363 and 484-525; these read NSDY…NNNN and DKIG…SDNS. Low complexity predominate over residues 515–524; it reads DNNSIGSSDN. The helical transmembrane segment at 588–608 threads the bilayer; sequence ILAVTISAIGIICVALLLTVV.

It localises to the membrane. This is an uncharacterized protein from Dictyostelium discoideum (Social amoeba).